The following is a 493-amino-acid chain: 3-octaprenyl-4-hydroxybenzoate carboxy-lyase (493 aa).

N172 serves as a coordination point for Mn(2+). Prenylated FMN contacts are provided by residues 175 to 177 (IYR), 189 to 191 (RWL), and 194 to 195 (RG). E238 is a binding site for Mn(2+). D287 functions as the Proton donor in the catalytic mechanism.

Belongs to the UbiD family. As to quaternary structure, homohexamer. The cofactor is prenylated FMN. It depends on Mn(2+) as a cofactor.

Its subcellular location is the cell membrane. It carries out the reaction a 4-hydroxy-3-(all-trans-polyprenyl)benzoate + H(+) = a 2-(all-trans-polyprenyl)phenol + CO2. It participates in cofactor biosynthesis; ubiquinone biosynthesis. In terms of biological role, catalyzes the decarboxylation of 3-octaprenyl-4-hydroxy benzoate to 2-octaprenylphenol, an intermediate step in ubiquinone biosynthesis. In Cellvibrio japonicus (strain Ueda107) (Pseudomonas fluorescens subsp. cellulosa), this protein is 3-octaprenyl-4-hydroxybenzoate carboxy-lyase.